A 338-amino-acid polypeptide reads, in one-letter code: Lipoate-protein ligase A (338 aa).

Positions 29–216 (PATQRVLFLW…AFFAHYGERV (188 aa)) constitute a BPL/LPL catalytic domain. Residues Arg71, 76 to 79 (GAVF), and Lys134 each bind ATP. Lys134 contributes to the (R)-lipoate binding site.

This sequence belongs to the LplA family. Monomer.

Its subcellular location is the cytoplasm. The enzyme catalyses L-lysyl-[lipoyl-carrier protein] + (R)-lipoate + ATP = N(6)-[(R)-lipoyl]-L-lysyl-[lipoyl-carrier protein] + AMP + diphosphate + H(+). It participates in protein modification; protein lipoylation via exogenous pathway; protein N(6)-(lipoyl)lysine from lipoate: step 1/2. The protein operates within protein modification; protein lipoylation via exogenous pathway; protein N(6)-(lipoyl)lysine from lipoate: step 2/2. Functionally, catalyzes both the ATP-dependent activation of exogenously supplied lipoate to lipoyl-AMP and the transfer of the activated lipoyl onto the lipoyl domains of lipoate-dependent enzymes. This chain is Lipoate-protein ligase A, found in Salmonella paratyphi C (strain RKS4594).